Reading from the N-terminus, the 197-residue chain is Peptidyl-tRNA hydrolase (197 aa).

TRNA is bound at residue Y21. H26 acts as the Proton acceptor in catalysis. Residues Y72, N74, and N120 each coordinate tRNA.

This sequence belongs to the PTH family. In terms of assembly, monomer.

Its subcellular location is the cytoplasm. The enzyme catalyses an N-acyl-L-alpha-aminoacyl-tRNA + H2O = an N-acyl-L-amino acid + a tRNA + H(+). Functionally, hydrolyzes ribosome-free peptidyl-tRNAs (with 1 or more amino acids incorporated), which drop off the ribosome during protein synthesis, or as a result of ribosome stalling. Its function is as follows. Catalyzes the release of premature peptidyl moieties from peptidyl-tRNA molecules trapped in stalled 50S ribosomal subunits, and thus maintains levels of free tRNAs and 50S ribosomes. In Saccharophagus degradans (strain 2-40 / ATCC 43961 / DSM 17024), this protein is Peptidyl-tRNA hydrolase.